Here is a 352-residue protein sequence, read N- to C-terminus: Protein-glutamate methylesterase/protein-glutamine glutaminase 2 (352 aa).

The 116-residue stretch at M1–D116 folds into the Response regulatory domain. A 4-aspartylphosphate modification is found at D50. The 193-residue stretch at S159–K351 folds into the CheB-type methylesterase domain. Catalysis depends on residues S171, H197, and D293.

The protein belongs to the CheB family. In terms of processing, phosphorylated by CheA. Phosphorylation of the N-terminal regulatory domain activates the methylesterase activity.

The protein resides in the cytoplasm. It carries out the reaction [protein]-L-glutamate 5-O-methyl ester + H2O = L-glutamyl-[protein] + methanol + H(+). The catalysed reaction is L-glutaminyl-[protein] + H2O = L-glutamyl-[protein] + NH4(+). Functionally, involved in chemotaxis. Part of a chemotaxis signal transduction system that modulates chemotaxis in response to various stimuli. Catalyzes the demethylation of specific methylglutamate residues introduced into the chemoreceptors (methyl-accepting chemotaxis proteins or MCP) by CheR. Also mediates the irreversible deamidation of specific glutamine residues to glutamic acid. In Shewanella denitrificans (strain OS217 / ATCC BAA-1090 / DSM 15013), this protein is Protein-glutamate methylesterase/protein-glutamine glutaminase 2.